Consider the following 422-residue polypeptide: Pre-B-cell leukemia transcription factor 2 (422 aa).

Residues 1-43 form a disordered region; the sequence is MDEQGRLMQARGVGIPGHPIHGGPQTLTPHPMHEPPADNGEPR. Positions 31 to 43 are enriched in basic and acidic residues; the sequence is PMHEPPADNGEPR. The PBC domain occupies 42–236; it reads PRKQDIGDIL…VMILRSRFLD (195 aa). The interval 49–128 is PBC-A; sequence DILQQIMTIT…EGVAGPEKGG (80 aa). The tract at residues 131–236 is PBC-B; sequence AAAAAAAAAS…VMILRSRFLD (106 aa). The segment at residues 237–299 is a DNA-binding region (homeobox); that stretch reads ARRKRRNFSK…NKRIRYKKNI (63 aa). Disordered regions lie at residues 319–341 and 353–422; these read QGGH…GSFN and QGLN…DTSN. The segment covering 401-410 has biased composition (polar residues); that stretch reads VTPSSVTSPT.

Belongs to the TALE/PBX homeobox family.

It localises to the nucleus. Its function is as follows. Transcriptional activator that binds the sequence 5'-ATCAATCAA-3'. This is Pre-B-cell leukemia transcription factor 2 from Xenopus tropicalis (Western clawed frog).